We begin with the raw amino-acid sequence, 583 residues long: uncharacterized protein (583 aa).

24–140 serves as a coordination point for a nucleoside 3',5'-cyclic phosphate; sequence ILADIDDEQL…SAMLRAMARM (117 aa). One can recognise a PNPLA domain in the interval 309–469; the sequence is LVMAGGGARG…LNNLPANVMC (161 aa). The GXGXXG signature appears at 313-318; it reads GGGARG. The GXSXG motif lies at 340–344; sequence GTSSG. Catalysis depends on Ser-342, which acts as the Nucleophile. Asp-456 serves as the catalytic Proton acceptor. The DGA/G motif lies at 456 to 458; the sequence is DGG.

Belongs to the NTE family.

This is an uncharacterized protein from Mycobacterium tuberculosis (strain CDC 1551 / Oshkosh).